Reading from the N-terminus, the 511-residue chain is Probable G-protein coupled receptor 152 (511 aa).

The interval 1–20 (MDTAVEANLGAAGHGPRTEL) is disordered. Residues 1 to 33 (MDTAVEANLGAAGHGPRTELSDEDYYPQGSWDT) are Extracellular-facing. A helical membrane pass occupies residues 34–54 (VFLVALLLLGLPANGLMAWLA). Over 55 to 65 (GSQARHGAGTR) the chain is Cytoplasmic. Residues 66 to 86 (LALLLLSLALSDFLFLAAATF) form a helical membrane-spanning segment. Topologically, residues 87 to 105 (QILEIQHGGHWPLGTAACR) are extracellular. A disulfide bridge links Cys-104 with Cys-182. The helical transmembrane segment at 106-126 (FYYFLWGVSYSSGLFLLTALS) threads the bilayer. Topologically, residues 127–148 (LDRCLLALCPRWYPGHRPARLP) are cytoplasmic. The helical transmembrane segment at 149 to 169 (LWVCAGVWVLATLFSVPWLVF) threads the bilayer. Residues 170-194 (PEAAVWWYDLVICLDFWDTEELPLR) are Extracellular-facing. A helical transmembrane segment spans residues 195-215 (MLEILGGFLPFLLLLVCHVLT). Residues 216–258 (QATACRTCCGHQPRRMACHGFARVAKTILSAYVVLRLPYQLAQ) are Cytoplasmic-facing. A helical transmembrane segment spans residues 259–279 (LLYLAFLWDVYPGYLLWEALV). Residues 280 to 282 (YSD) are Extracellular-facing. A helical transmembrane segment spans residues 283-303 (YLILLNSCLSPFLCLAASADL). Residues 304-511 (RALLRTVLSS…PEEAPSAGPT (208 aa)) are Cytoplasmic-facing. Disordered stretches follow at residues 328-349 (PAEPQTLPGPTSEGQSRLDSVV), 361-386 (SDSVVQPEVSPSAQPQSDSVAQPTVG), and 407-511 (PQLD…AGPT). Composition is skewed to polar residues over residues 335–345 (PGPTSEGQSRL) and 369–386 (VSPSAQPQSDSVAQPTVG). Residues 419-433 (PSAQPQSKSVVQPQV) show a composition bias toward low complexity. Polar residues-rich tracts occupy residues 435 to 453 (PLTQPQLDPVAQPQSNTET) and 462 to 473 (SASNPGEENSSG).

Belongs to the G-protein coupled receptor 1 family.

The protein resides in the cell membrane. Functionally, orphan receptor. This Mus musculus (Mouse) protein is Probable G-protein coupled receptor 152 (Gpr152).